Reading from the N-terminus, the 418-residue chain is Thyroxine-binding globulin (418 aa).

Residues 1-20 (MSVFFYLFVLVFGLQATIHC) form the signal peptide. Residues Asn24, Asn39, Asn102, Asn168, Asn227, and Asn256 are each glycosylated (N-linked (GlcNAc...) asparagine). Thyroxine-binding residues include Asn296 and Lys401.

The protein belongs to the serpin family.

It is found in the secreted. Its function is as follows. Major thyroid hormone transport protein in serum. This chain is Thyroxine-binding globulin (Serpina7), found in Mus musculus (Mouse).